Here is a 210-residue protein sequence, read N- to C-terminus: T-cell antigen CD7 (210 aa).

The signal sequence occupies residues 1–23; it reads MTQQAVLALLLTLAGILPGPLDA. Residues 24 to 129 form the Ig-like domain; that stretch reads QDVHQSPRLT…RGLFTTVVVK (106 aa). Over 24-150 the chain is Extracellular; it reads QDVHQSPRLT…EPLQTSFSFP (127 aa). N-linked (GlcNAc...) asparagine glycosylation is found at asparagine 42, asparagine 86, and asparagine 93. A disulfide bond links cysteine 45 and cysteine 111. Residues 151–171 form a helical membrane-spanning segment; sequence AAIAVGFFFTGLLLGVVCSML. Cysteine 168 carries S-palmitoyl cysteine lipidation. Over 172–210 the chain is Cytoplasmic; sequence RKIQIKKLCASGIKESPCVVYEDMSYSNRKTPCIPNQYQ.

In terms of assembly, interacts with SECTM1.

The protein localises to the membrane. Transmembrane glycoprotein expressed by T-cells and natural killer (NK) cells and their precursors. Plays a costimulatory role in T-cell activation upon binding to its ligand K12/SECTM1. In turn, mediates the production of cytokines such as IL-2. On resting NK-cells, CD7 activation results in a significant induction of gamma-interferon levels. The protein is T-cell antigen CD7 (Cd7) of Mus musculus (Mouse).